A 198-amino-acid chain; its full sequence is Suppressor of cytokine signaling 2 (198 aa).

The interval 1–29 (MTLRCLEPSGNGADRTRSQWGTAGLPEEQ) is disordered. The interaction with AREL1 stretch occupies residues 1–75 (MTLRCLEPSG…PEGTFLIRDS (75 aa)). S30 carries the phosphoserine modification. The region spanning 48–156 (WYWGSMTVNE…TVHLYLTKPL (109 aa)) is the SH2 domain. S52 carries the phosphoserine; by PKC modification. Residues 151–197 (YLTKPLYTSAPTLQHFCRLAINKCTGTIWGLPLPTRLKDYLEEYKFQ) enclose the SOCS box domain. K173 is covalently cross-linked (Glycyl lysine isopeptide (Lys-Gly) (interchain with G-Cter in ubiquitin)).

As to quaternary structure, substrate-recognition component of the ECS(SOCS2) complex, composed of SOCS2, CUL5, ELOB, ELOC and RNF7/RBX2. Interacts with IGF1R. Interacts with DCUN1D1. Post-translationally, ubiquitinated; mediated by AREL1 and leading to its subsequent proteasomal degradation. Ubiquitination is dependent on phosphorylation at Ser-52, by PKC and is stimulated by LPS. In terms of processing, phosphorylation at Ser-52 by PKC facilitates its ubiquitination and proteasomal degradation. Expressed primarily in the testis, some expression in liver and lung.

It localises to the cytoplasm. It functions in the pathway protein modification; protein ubiquitination. Substrate-recognition component of a cullin-5-RING E3 ubiquitin-protein ligase complex (ECS complex, also named CRL5 complex), which mediates the ubiquitination and subsequent proteasomal degradation of target proteins, such as EPOR and GHR. Specifically recognizes and binds phosphorylated proteins via its SH2 domain, promoting their ubiquitination. The ECS(SOCS2) complex acts as a key regulator of growth hormone receptor (GHR) levels by mediating ubiquitination and degradation of GHR, following GHR phosphorylation by JAK2. The ECS(SOCS2) also catalyzes ubiquitination and degradation of JAK2-phosphorylated EPOR. The polypeptide is Suppressor of cytokine signaling 2 (Mus musculus (Mouse)).